A 122-amino-acid polypeptide reads, in one-letter code: Small ribosomal subunit protein uS13 (122 aa).

A disordered region spans residues 99 to 122 (RGQRTHTNARTRKGPAKAIAGKKK).

It belongs to the universal ribosomal protein uS13 family. In terms of assembly, part of the 30S ribosomal subunit. Forms a loose heterodimer with protein S19. Forms two bridges to the 50S subunit in the 70S ribosome.

In terms of biological role, located at the top of the head of the 30S subunit, it contacts several helices of the 16S rRNA. In the 70S ribosome it contacts the 23S rRNA (bridge B1a) and protein L5 of the 50S subunit (bridge B1b), connecting the 2 subunits; these bridges are implicated in subunit movement. Contacts the tRNAs in the A and P-sites. The polypeptide is Small ribosomal subunit protein uS13 (Bradyrhizobium diazoefficiens (strain JCM 10833 / BCRC 13528 / IAM 13628 / NBRC 14792 / USDA 110)).